The chain runs to 186 residues: Peptidyl-tRNA hydrolase (186 aa).

Y14 contributes to the tRNA binding site. The Proton acceptor role is filled by H19. Residues Y61, N63, and N107 each contribute to the tRNA site.

The protein belongs to the PTH family. In terms of assembly, monomer.

It is found in the cytoplasm. The enzyme catalyses an N-acyl-L-alpha-aminoacyl-tRNA + H2O = an N-acyl-L-amino acid + a tRNA + H(+). In terms of biological role, hydrolyzes ribosome-free peptidyl-tRNAs (with 1 or more amino acids incorporated), which drop off the ribosome during protein synthesis, or as a result of ribosome stalling. Catalyzes the release of premature peptidyl moieties from peptidyl-tRNA molecules trapped in stalled 50S ribosomal subunits, and thus maintains levels of free tRNAs and 50S ribosomes. The sequence is that of Peptidyl-tRNA hydrolase from Helicobacter pylori (strain Shi470).